The primary structure comprises 309 residues: Lipoyl synthase (309 aa).

[4Fe-4S] cluster contacts are provided by Cys43, Cys48, Cys54, Cys70, Cys74, Cys77, and Ser283. The Radical SAM core domain maps to 56–272 (AVRKTATFMI…KEIAMQKGFS (217 aa)).

The protein belongs to the radical SAM superfamily. Lipoyl synthase family. It depends on [4Fe-4S] cluster as a cofactor.

It localises to the cytoplasm. It catalyses the reaction [[Fe-S] cluster scaffold protein carrying a second [4Fe-4S](2+) cluster] + N(6)-octanoyl-L-lysyl-[protein] + 2 oxidized [2Fe-2S]-[ferredoxin] + 2 S-adenosyl-L-methionine + 4 H(+) = [[Fe-S] cluster scaffold protein] + N(6)-[(R)-dihydrolipoyl]-L-lysyl-[protein] + 4 Fe(3+) + 2 hydrogen sulfide + 2 5'-deoxyadenosine + 2 L-methionine + 2 reduced [2Fe-2S]-[ferredoxin]. It functions in the pathway protein modification; protein lipoylation via endogenous pathway; protein N(6)-(lipoyl)lysine from octanoyl-[acyl-carrier-protein]. Functionally, catalyzes the radical-mediated insertion of two sulfur atoms into the C-6 and C-8 positions of the octanoyl moiety bound to the lipoyl domains of lipoate-dependent enzymes, thereby converting the octanoylated domains into lipoylated derivatives. The sequence is that of Lipoyl synthase from Shouchella clausii (strain KSM-K16) (Alkalihalobacillus clausii).